A 143-amino-acid polypeptide reads, in one-letter code: Large ribosomal subunit protein uL15 (143 aa).

The interval 1–57 (MQLNNLKPAAGSKHAKRRVGRGIGSGLGKTAGRGHKGQKSRSGGFHKVGFEGGQMPL) is disordered. A compositionally biased stretch (gly residues) spans 21-31 (RGIGSGLGKTA).

This sequence belongs to the universal ribosomal protein uL15 family. As to quaternary structure, part of the 50S ribosomal subunit.

Its function is as follows. Binds to the 23S rRNA. The protein is Large ribosomal subunit protein uL15 of Ralstonia pickettii (strain 12J).